We begin with the raw amino-acid sequence, 116 residues long: MAAAAPGSGAAREEEGTGGDAATPQPPAPTSAPGARLSRLPLARVKALVKADPDVTLAGQEAIFILARAAELFVETIAKDAYCCAQQGKRKTLQRRDLDNAIEAVDEFAFLEGTLD.

Positions 1–10 are enriched in low complexity; the sequence is MAAAAPGSGA. The interval 1 to 36 is disordered; that stretch reads MAAAAPGSGAAREEEGTGGDAATPQPPAPTSAPGAR.

As to quaternary structure, component of the DNA polymerase epsilon complex consisting of four subunits: the catalytic subunit POLE and the accessory subunits POLE2, POLE3 and POLE4. Interaction with POLE3 is a prerequisite for further binding with POLE and POLE2.

It localises to the nucleus. Accessory component of the DNA polymerase epsilon complex. Participates in DNA repair and in chromosomal DNA replication. The chain is DNA polymerase epsilon subunit 4 (POLE4) from Bos taurus (Bovine).